A 157-amino-acid chain; its full sequence is Probable succinate transporter subunit YjjB (157 aa).

4 helical membrane passes run 6 to 26 (FFMALMQDMILSAIPAVGFAM), 55 to 75 (AGFNIEWSTFMASLLVGSIGI), 87 to 107 (VFTVAAVIPMFPGISAYTAMI), and 129 to 149 (FLKASSIVGALSIGLSVPGLW).

This sequence belongs to the ThrE exporter (TC 2.A.79) family. In terms of assembly, the transporter is composed of YjjB and YjjP.

The protein resides in the cell inner membrane. Its function is as follows. Involved in succinate export with YjjP. Both proteins are required for export. The sequence is that of Probable succinate transporter subunit YjjB from Salmonella arizonae (strain ATCC BAA-731 / CDC346-86 / RSK2980).